The following is a 260-amino-acid chain: Probable carbohydrate esterase At4g34215 (260 aa).

The disordered stretch occupies residues 1 to 22 (MEGGSITPGEDKPEIQSPIPPN). Residues Ser31, Asp235, and His238 contribute to the active site.

Belongs to the carbohydrate esterase 6 family.

The protein is Probable carbohydrate esterase At4g34215 of Arabidopsis thaliana (Mouse-ear cress).